The sequence spans 459 residues: Serine protease HTRA3 (459 aa).

Positions 1–23 (MQARALLPATLAILATLAVLALA) are cleaved as a signal peptide. Residues 27–90 (PAAPCPARCD…ECVRGVCRCR (64 aa)) form the IGFBP N-terminal domain. 8 disulfide bridges follow: Cys31-Cys54, Cys35-Cys56, Cys40-Cys57, Cys45-Cys60, Cys68-Cys82, Cys76-Cys87, Cys89-Cys107, and Cys96-Cys132. The Kazal-like domain occupies 76–134 (CGDSLECVRGVCRCRWTHTVCGTDGHTYADVCALQAASRRALQVSGTPVRQLQKGACPS). The segment at 181 to 347 (GSGFIMSEAG…IPSDRITRFL (167 aa)) is serine protease. Catalysis depends on charge relay system residues His197, Asp233, and Ser311. A PDZ domain is found at 365–450 (IRMRTITPSL…EVRRGNDDLL (86 aa)).

Belongs to the peptidase S1C family. In terms of assembly, homotrimer. Interacts with MYH9. Interacts with TGFB1; the interaction inhibits TGFB-mediated signaling. Interacts with BMP4; the interaction inhibits BMP4-mediated signaling. Interacts with TGFB2 and GDF5. In terms of tissue distribution, highest level of isoform 1 in maternal part of the placenta, moderate level in heart, testis and ovary, low level in muscle and lung. High expression found in granulosa cells of the ovary. Expressed in bone matrix, particularly in articular chondrocytes. Very low level of isoform 2 expressed in placenta. Expressed in the bone matrix, particularly in articular chondrocytes.

Its subcellular location is the secreted. In terms of biological role, serine protease that cleaves beta-casein/CSN2 as well as several extracellular matrix (ECM) proteoglycans such as decorin/DCN, biglycan/BGN and fibronectin/FN1. Inhibits signaling mediated by TGF-beta family proteins possibly indirectly by degradation of these ECM proteoglycans. May act as a tumor suppressor. Negatively regulates, in vitro, trophoblast invasion during placental development and may be involved in the development of the placenta in vivo. May also have a role in ovarian development, granulosa cell differentiation and luteinization. The protein is Serine protease HTRA3 (Htra3) of Mus musculus (Mouse).